Reading from the N-terminus, the 152-residue chain is UPF0756 membrane protein CA_C0092 (152 aa).

4 helical membrane passes run 5 to 25, 50 to 70, 82 to 102, and 117 to 137; these read IILVVILGISIVGKATSVAIS, MFWGLVLLTAAILIPIAQGNV, FVGITALVLSFLTTYLSGVGL, and LILGSVAAAAFLGGVPVGPLI.

This sequence belongs to the UPF0756 family.

It is found in the cell membrane. The polypeptide is UPF0756 membrane protein CA_C0092 (Clostridium acetobutylicum (strain ATCC 824 / DSM 792 / JCM 1419 / IAM 19013 / LMG 5710 / NBRC 13948 / NRRL B-527 / VKM B-1787 / 2291 / W)).